A 419-amino-acid chain; its full sequence is Phospho-N-acetylmuramoyl-pentapeptide-transferase (419 aa).

Transmembrane regions (helical) follow at residues 22–42 (YVSF…TAIG), 72–92 (TPTM…LLCA), 94–114 (LNNI…ALGF), 135–155 (IVGQ…SPDV), 210–230 (AAWL…SNGA), 238–258 (GLAA…AYMS), 266–286 (FLNI…AAFI), 303–323 (FMGD…AIII), 327–347 (LLIP…MLQV), and 396–416 (KIVV…IVTL).

The protein belongs to the glycosyltransferase 4 family. MraY subfamily. Mg(2+) is required as a cofactor.

It is found in the cell inner membrane. It carries out the reaction UDP-N-acetyl-alpha-D-muramoyl-L-alanyl-gamma-D-glutamyl-meso-2,6-diaminopimeloyl-D-alanyl-D-alanine + di-trans,octa-cis-undecaprenyl phosphate = di-trans,octa-cis-undecaprenyl diphospho-N-acetyl-alpha-D-muramoyl-L-alanyl-D-glutamyl-meso-2,6-diaminopimeloyl-D-alanyl-D-alanine + UMP. Its pathway is cell wall biogenesis; peptidoglycan biosynthesis. Catalyzes the initial step of the lipid cycle reactions in the biosynthesis of the cell wall peptidoglycan: transfers peptidoglycan precursor phospho-MurNAc-pentapeptide from UDP-MurNAc-pentapeptide onto the lipid carrier undecaprenyl phosphate, yielding undecaprenyl-pyrophosphoryl-MurNAc-pentapeptide, known as lipid I. This Parabacteroides distasonis (strain ATCC 8503 / DSM 20701 / CIP 104284 / JCM 5825 / NCTC 11152) protein is Phospho-N-acetylmuramoyl-pentapeptide-transferase.